A 20-amino-acid chain; its full sequence is Large ribosomal subunit protein bL33 (20 aa).

Belongs to the bacterial ribosomal protein bL33 family.

This Brevundimonas vesicularis (Pseudomonas vesicularis) protein is Large ribosomal subunit protein bL33 (rpmG).